The sequence spans 845 residues: Protein translocase subunit SecA 1 (845 aa).

ATP-binding positions include Q91, 109-113 (GEGKT), and D498. The tract at residues 795-845 (TDFGTAQHVSAEDGKEKAKKQPIVKGDKVGRNDPCPCGSGKKYKNCHGKEE) is disordered. Positions 829, 831, 840, and 841 each coordinate Zn(2+). Basic residues predominate over residues 835–845 (KKYKNCHGKEE).

The protein belongs to the SecA family. Monomer and homodimer. Part of the essential Sec protein translocation apparatus which comprises SecA, SecYEG and auxiliary proteins SecDF. Other proteins may also be involved. It depends on Zn(2+) as a cofactor.

It localises to the cell membrane. The protein localises to the cytoplasm. It carries out the reaction ATP + H2O + cellular proteinSide 1 = ADP + phosphate + cellular proteinSide 2.. Functionally, part of the Sec protein translocase complex. Interacts with the SecYEG preprotein conducting channel. Has a central role in coupling the hydrolysis of ATP to the transfer of proteins into and across the cell membrane, serving as an ATP-driven molecular motor driving the stepwise translocation of polypeptide chains across the membrane. This chain is Protein translocase subunit SecA 1, found in Staphylococcus haemolyticus (strain JCSC1435).